The primary structure comprises 186 residues: dITP/XTP pyrophosphatase (186 aa).

A substrate-binding site is contributed by Thr-7 to Lys-12. The Mg(2+) site is built by Glu-36 and Asp-65. Asp-65 serves as the catalytic Proton acceptor. Residues Ser-66, Phe-140–Asp-143, Lys-163, and His-168–Arg-169 each bind substrate.

It belongs to the HAM1 NTPase family. In terms of assembly, homodimer. Mg(2+) is required as a cofactor. The cofactor is Mn(2+).

The enzyme catalyses XTP + H2O = XMP + diphosphate + H(+). It catalyses the reaction dITP + H2O = dIMP + diphosphate + H(+). It carries out the reaction ITP + H2O = IMP + diphosphate + H(+). Its function is as follows. Pyrophosphatase that catalyzes the hydrolysis of nucleoside triphosphates to their monophosphate derivatives, with a high preference for the non-canonical purine nucleotides XTP (xanthosine triphosphate), dITP (deoxyinosine triphosphate) and ITP. Seems to function as a house-cleaning enzyme that removes non-canonical purine nucleotides from the nucleotide pool, thus preventing their incorporation into DNA/RNA and avoiding chromosomal lesions. The polypeptide is dITP/XTP pyrophosphatase (Pyrococcus horikoshii (strain ATCC 700860 / DSM 12428 / JCM 9974 / NBRC 100139 / OT-3)).